The primary structure comprises 269 residues: Probable sulfate transport system permease protein cysT (269 aa).

The next 7 membrane-spanning stretches (helical) occupy residues 10–30 (SWRI…LALL), 60–80 (MALI…WILV), 92–112 (AAID…LATV), 130–150 (VVFT…PFVV), 179–199 (FWKV…ALAF), 208–228 (SVVI…VLIF), and 240–260 (TVIG…INII). Positions 54–255 (YSITLSMALI…ILSISLFILV (202 aa)) constitute an ABC transmembrane type-1 domain.

It belongs to the binding-protein-dependent transport system permease family. CysTW subfamily.

The protein localises to the plastid. Its subcellular location is the chloroplast membrane. Functionally, part of the ABC transporter complex cysAWTP (TC 3.A.1.6.1) involved in sulfate/thiosulfate import. Probably responsible for the translocation of the substrate across the membrane. In Mesostigma viride (Green alga), this protein is Probable sulfate transport system permease protein cysT (cysT).